The chain runs to 104 residues: Inner membrane protein YjcH (104 aa).

Residues methionine 1–arginine 24 lie on the Cytoplasmic side of the membrane. A helical transmembrane segment spans residues phenylalanine 25–alanine 47. Residues proline 48–valine 61 are Periplasmic-facing. The chain crosses the membrane as a helical span at residues threonine 62–tryptophan 84. Residues arginine 85–serine 104 are Cytoplasmic-facing.

It is found in the cell inner membrane. The protein is Inner membrane protein YjcH (yjcH) of Escherichia coli (strain K12).